Here is a 547-residue protein sequence, read N- to C-terminus: Chaperonin GroEL (547 aa).

ATP-binding positions include 30–33, Lys51, 87–91, Gly415, 479–481, and Asp495; these read TLGP, DGTTT, and NAA.

The protein belongs to the chaperonin (HSP60) family. As to quaternary structure, forms a cylinder of 14 subunits composed of two heptameric rings stacked back-to-back. Interacts with the co-chaperonin GroES.

The protein resides in the cytoplasm. The enzyme catalyses ATP + H2O + a folded polypeptide = ADP + phosphate + an unfolded polypeptide.. In terms of biological role, together with its co-chaperonin GroES, plays an essential role in assisting protein folding. The GroEL-GroES system forms a nano-cage that allows encapsulation of the non-native substrate proteins and provides a physical environment optimized to promote and accelerate protein folding. The polypeptide is Chaperonin GroEL (Cupriavidus metallidurans (strain ATCC 43123 / DSM 2839 / NBRC 102507 / CH34) (Ralstonia metallidurans)).